The following is a 309-amino-acid chain: Olfactory receptor 8A1 (309 aa).

Residues 1-28 (MTAENQSTVTEFILGGLTNRPELQLPLF) lie on the Extracellular side of the membrane. A helical transmembrane segment spans residues 29–49 (LLFLGIYVVTMVGNLGMITLI). Over 50-56 (GLNSQLH) the chain is Cytoplasmic. The helical transmembrane segment at 57-77 (TPMYFFLSNLSLVDLCYSSVI) threads the bilayer. At 78–90 (TPKMLINFVSQRN) the chain is on the extracellular side. The chain crosses the membrane as a helical span at residues 91-111 (LISYVGCMSQLYFFLVFVIAE). The cysteines at positions 97 and 188 are disulfide-linked. At 112–133 (CYMLTVMAYDRYVAICQPLLYN) the chain is on the cytoplasmic side. Residues 134-154 (IIMSPALCSLLVAFVYAVGLI) form a helical membrane-spanning segment. The Extracellular portion of the chain corresponds to 155–195 (GSAIETGLMLKLNYCEDLISHYFCDILPLMKLSCSSTYDVE). The helical transmembrane segment at 196–216 (MAVFFLAGFDIIVTSLTVLIS) threads the bilayer. Topologically, residues 217–238 (YAFILSSILRISSNEGRSKAFS) are cytoplasmic. Residues 239–259 (TCSSHFAAVGLFYGSTAFMYL) traverse the membrane as a helical segment. Residues 260–270 (KPSTASSLAQE) are Extracellular-facing. Residues 271–291 (NVASVFYTTVIPMFNPLIYSL) form a helical membrane-spanning segment. Residues 292–309 (RNKEVKTALDKTLRRKVF) lie on the Cytoplasmic side of the membrane.

This sequence belongs to the G-protein coupled receptor 1 family.

The protein resides in the cell membrane. Its function is as follows. Odorant receptor. This is Olfactory receptor 8A1 from Mus musculus (Mouse).